A 546-amino-acid chain; its full sequence is Chaperonin GroEL (546 aa).

Residues 30–33 (TLGP), Lys-51, 87–91 (DGTTT), Gly-415, 479–481 (NAA), and Asp-495 each bind ATP. Positions 526-546 (KKDEPAMPAGGGMGGMGGMDF) are disordered. Residues 534–546 (AGGGMGGMGGMDF) show a composition bias toward gly residues.

The protein belongs to the chaperonin (HSP60) family. Forms a cylinder of 14 subunits composed of two heptameric rings stacked back-to-back. Interacts with the co-chaperonin GroES.

The protein localises to the cytoplasm. It carries out the reaction ATP + H2O + a folded polypeptide = ADP + phosphate + an unfolded polypeptide.. Together with its co-chaperonin GroES, plays an essential role in assisting protein folding. The GroEL-GroES system forms a nano-cage that allows encapsulation of the non-native substrate proteins and provides a physical environment optimized to promote and accelerate protein folding. This chain is Chaperonin GroEL, found in Xanthomonas oryzae pv. oryzae (strain MAFF 311018).